Consider the following 489-residue polypeptide: Glycogen synthase (489 aa).

R20 lines the ADP-alpha-D-glucose pocket.

It belongs to the glycosyltransferase 1 family. Bacterial/plant glycogen synthase subfamily.

It catalyses the reaction [(1-&gt;4)-alpha-D-glucosyl](n) + ADP-alpha-D-glucose = [(1-&gt;4)-alpha-D-glucosyl](n+1) + ADP + H(+). Its pathway is glycan biosynthesis; glycogen biosynthesis. Synthesizes alpha-1,4-glucan chains using ADP-glucose. This Pelodictyon phaeoclathratiforme (strain DSM 5477 / BU-1) protein is Glycogen synthase.